The sequence spans 165 residues: ATP synthase subunit delta, mitochondrial (165 aa).

The N-terminal 27 residues, 1-27 (MNSLRIARAALRVRPTAVRAPLQRRGY), are a transit peptide targeting the mitochondrion.

This sequence belongs to the ATPase epsilon chain family. As to quaternary structure, F-type ATPases have 2 components, CF(1) - the catalytic core - and CF(0) - the membrane proton channel. CF(1) has five subunits: alpha(3), beta(3), gamma(1), delta(1), epsilon(1). CF(0) has three main subunits: a, b and c.

The protein resides in the mitochondrion. It is found in the mitochondrion inner membrane. In terms of biological role, mitochondrial membrane ATP synthase (F(1)F(0) ATP synthase or Complex V) produces ATP from ADP in the presence of a proton gradient across the membrane which is generated by electron transport complexes of the respiratory chain. F-type ATPases consist of two structural domains, F(1) - containing the extramembraneous catalytic core, and F(0) - containing the membrane proton channel, linked together by a central stalk and a peripheral stalk. During catalysis, ATP turnover in the catalytic domain of F(1) is coupled via a rotary mechanism of the central stalk subunits to proton translocation. Part of the complex F(1) domain and of the central stalk which is part of the complex rotary element. Rotation of the central stalk against the surrounding alpha(3)beta(3) subunits leads to hydrolysis of ATP in three separate catalytic sites on the beta subunits. In Neurospora crassa (strain ATCC 24698 / 74-OR23-1A / CBS 708.71 / DSM 1257 / FGSC 987), this protein is ATP synthase subunit delta, mitochondrial (des).